The primary structure comprises 202 residues: Holliday junction branch migration complex subunit RuvA (202 aa).

A domain I region spans residues 1–64 (MFAYIRGRLE…EDVISLYGFL (64 aa)). Residues 65-143 (TQEELNVFEL…KEQLTEYAQS (79 aa)) form a domain II region. A flexible linker region spans residues 144-152 (EEGGKVLDT). The tract at residues 152-202 (TDSSKMAEAVSALMVLGYSPAEANKAVSAVYREDMDIETIIKNALKGLARP) is domain III.

Belongs to the RuvA family. As to quaternary structure, homotetramer. Forms an RuvA(8)-RuvB(12)-Holliday junction (HJ) complex. HJ DNA is sandwiched between 2 RuvA tetramers; dsDNA enters through RuvA and exits via RuvB. An RuvB hexamer assembles on each DNA strand where it exits the tetramer. Each RuvB hexamer is contacted by two RuvA subunits (via domain III) on 2 adjacent RuvB subunits; this complex drives branch migration. In the full resolvosome a probable DNA-RuvA(4)-RuvB(12)-RuvC(2) complex forms which resolves the HJ.

Its subcellular location is the cytoplasm. In terms of biological role, the RuvA-RuvB-RuvC complex processes Holliday junction (HJ) DNA during genetic recombination and DNA repair, while the RuvA-RuvB complex plays an important role in the rescue of blocked DNA replication forks via replication fork reversal (RFR). RuvA specifically binds to HJ cruciform DNA, conferring on it an open structure. The RuvB hexamer acts as an ATP-dependent pump, pulling dsDNA into and through the RuvAB complex. HJ branch migration allows RuvC to scan DNA until it finds its consensus sequence, where it cleaves and resolves the cruciform DNA. This chain is Holliday junction branch migration complex subunit RuvA, found in Acetivibrio thermocellus (strain ATCC 27405 / DSM 1237 / JCM 9322 / NBRC 103400 / NCIMB 10682 / NRRL B-4536 / VPI 7372) (Clostridium thermocellum).